The chain runs to 339 residues: Phenylalanine--tRNA ligase alpha subunit (339 aa).

Residue glutamate 254 coordinates Mg(2+).

The protein belongs to the class-II aminoacyl-tRNA synthetase family. Phe-tRNA synthetase alpha subunit type 1 subfamily. As to quaternary structure, tetramer of two alpha and two beta subunits. Requires Mg(2+) as cofactor.

Its subcellular location is the cytoplasm. It carries out the reaction tRNA(Phe) + L-phenylalanine + ATP = L-phenylalanyl-tRNA(Phe) + AMP + diphosphate + H(+). This chain is Phenylalanine--tRNA ligase alpha subunit, found in Alkaliphilus oremlandii (strain OhILAs) (Clostridium oremlandii (strain OhILAs)).